A 264-amino-acid chain; its full sequence is uncharacterized protein (264 aa).

The first 22 residues, 1 to 22 (MKRKLTICLLIALIFYNGNAKA), serve as a signal peptide directing secretion. Residues 227–247 (LLWVIITTGSIIITALTYVGY) traverse the membrane as a helical segment.

The protein localises to the membrane. This is an uncharacterized protein from Bacillus subtilis (strain 168).